We begin with the raw amino-acid sequence, 66 residues long: Large ribosomal subunit protein uL29 (66 aa).

It belongs to the universal ribosomal protein uL29 family.

The polypeptide is Large ribosomal subunit protein uL29 (rpmC) (Helicobacter pylori (strain J99 / ATCC 700824) (Campylobacter pylori J99)).